Consider the following 1030-residue polypeptide: Alpha-L-rhamnosidase (1030 aa).

The tract at residues 133-297 (PSLEGSSWIW…GAGPWGRVAP (165 aa)) is carbohydrate-binding module-67 (CBM67). 2 residues coordinate Ca(2+): D179 and N180. Alpha-L-rhamnose contacts are provided by residues 179 to 180 (DN) and W203. Residues N228 and P233 each coordinate Ca(2+). Residues D630, 634–636 (RDE), D643, and W695 each bind alpha-L-rhamnose. E636 acts as the Proton donor in catalysis. The active-site Proton acceptor is the E895. H916 lines the alpha-L-rhamnose pocket.

It belongs to the glycosyl hydrolase 78 family.

The enzyme catalyses Hydrolysis of terminal non-reducing alpha-L-rhamnose residues in alpha-L-rhamnosides.. Functionally, alpha-L-rhamnosidase which is able to degrade p-nitrophenyl-alpha-L-rhamnopyranoside (PNP-Rha) in vitro. Releases L-rhamnose from citrus flavonoids such as naringin, rutin and hesperidin, and the arabinogalactan-protein (AGP) gum arabic. AGPs are a family of proteoglycans that are localized on the cell surfaces of higher plants. Cleaves both the alpha-1,6 and the alpha-1,2-linked rhamnosyl residues. This is Alpha-L-rhamnosidase from Streptomyces avermitilis (strain ATCC 31267 / DSM 46492 / JCM 5070 / NBRC 14893 / NCIMB 12804 / NRRL 8165 / MA-4680).